The primary structure comprises 352 residues: MSYQAEYIWIDGTEPEPLMRSKTRIIKDGKEPEIWGFDGSSTNQAPGSNSDCVLRPVFETPDPIRGGDNRLVLCEVQLTDFTPPTNTRAAALGVAERYADMSPMFGIEQEYTFFKDGRPYGWPEVGYPAPQGPYYCGVGGSKMPGRQIVERHTQACLDAGLAIEGTNAEVMMGQWEFQIGVLPAPAIGDQIWLGRWLLHRIAEDYGVEVSFAAKPIPGDWNGAGAHTNFSTKQTMEGWDAIVTCCEALGTRVTEHVTHYGKGIEDRLTGKHETAPWNKYSWGASDRGASVRIPWAVEKAKKGWLEDRRPNANMDPYLVTALMIDTCCSALAGDKPTLFVPSQTTPAPAEASV.

One can recognise a GS beta-grasp domain in the interval 3-82 (YQAEYIWIDG…LCEVQLTDFT (80 aa)). A GS catalytic domain is found at 87–352 (TRAAALGVAE…TTPAPAEASV (266 aa)). Residues glutamate 108 and glutamate 110 each coordinate Mg(2+). An ATP-binding site is contributed by glutamate 164. Mg(2+) is bound by residues glutamate 169 and glutamate 176. Glutamate 272 lines the L-glutamate pocket.

The protein belongs to the glutamine synthetase family. Homooctamer and homotetramer. The cofactor is Mg(2+).

The protein localises to the cytoplasm. It carries out the reaction L-glutamate + NH4(+) + ATP = L-glutamine + ADP + phosphate + H(+). In terms of biological role, catalyzes the ATP-dependent biosynthesis of glutamine from glutamate and ammonia. The chain is Glutamine synthetase from Frankia alni.